Here is a 72-residue protein sequence, read N- to C-terminus: Prokaryotic ubiquitin-like protein Pup (72 aa).

Over residues 1–10 (MATKDTGGGQ) the composition is skewed to gly residues. A disordered region spans residues 1–45 (MATKDTGGGQQKATRNTEEVEEQAQDAQASEDLKERQEKLSDDVD). Residues 9 to 60 (GQQKATRNTEEVEEQAQDAQASEDLKERQEKLSDDVDSVLDEIDDVLEENAE) adopt a coiled-coil conformation. The ARC ATPase binding stretch occupies residues 28–66 (QASEDLKERQEKLSDDVDSVLDEIDDVLEENAEDFVRSF). Over residues 31–42 (EDLKERQEKLSD) the composition is skewed to basic and acidic residues. Glu-72 is covalently cross-linked (Isoglutamyl lysine isopeptide (Glu-Lys) (interchain with K-? in acceptor proteins)).

Belongs to the prokaryotic ubiquitin-like protein family. Strongly interacts with the proteasome-associated ATPase ARC through a hydrophobic interface; the interacting region of Pup lies in its C-terminal half. There is one Pup binding site per ARC hexamer ring.

The protein operates within protein degradation; proteasomal Pup-dependent pathway. Its function is as follows. Protein modifier that is covalently attached to lysine residues of substrate proteins, thereby targeting them for proteasomal degradation. The tagging system is termed pupylation. This is Prokaryotic ubiquitin-like protein Pup from Streptomyces avermitilis (strain ATCC 31267 / DSM 46492 / JCM 5070 / NBRC 14893 / NCIMB 12804 / NRRL 8165 / MA-4680).